A 577-amino-acid chain; its full sequence is Solute carrier family 22 member 16 (577 aa).

Residues 23-43 (LYFICAFQNISCGIHYLASVF) form a helical membrane-spanning segment. Residues Asn-57, Asn-65, Asn-68, and Asn-108 are each glycosylated (N-linked (GlcNAc...) asparagine). A run of 5 helical transmembrane segments spans residues 152-172 (WLAM…SVTF), 183-203 (VVLW…AFAV), 214-234 (FLAM…MEFI), 244-264 (VHLH…GYLV), and 268-288 (WLYQ…CWVL). Residues Asn-345 and Asn-352 are each glycosylated (N-linked (GlcNAc...) asparagine). Transmembrane regions (helical) follow at residues 359-379 (TLTV…FSLN), 389-409 (LNLF…CIAM), 416-436 (TVLA…MVIP), 441-461 (ILGV…FGLI), 476-496 (LAVG…PFSV), and 501-521 (IWIF…GVLT). The tract at residues 543–577 (ESENESKSSKLLLTTNNSGLEKTEAITPRDSGLGE) is disordered. Asn-546 and Asn-558 each carry an N-linked (GlcNAc...) asparagine glycan. Over residues 551 to 560 (SKLLLTTNNS) the composition is skewed to low complexity.

This sequence belongs to the major facilitator (TC 2.A.1) superfamily. Organic cation transporter (TC 2.A.1.19) family. Expressed in testis and epididymis (at protein level). Expressed in endometrium (at protein level); highly expressed during the normal secretory phase, but expression is significantly reduced in the proliferative phase. Expressed at lower levels in adult tissues including bone marrow (at protein level). Expressed in hematopoietic cells, including CD34(+) leukocytes. Expressed in fetal liver (at protein level), brain, lung, kidney, heart, skeletal muscle, spleen and thymus. Expressed in leukemia cells. Abundantly expressed in ovarian cancer clear-cell adenocarcinoma.

It localises to the cell membrane. It catalyses the reaction (R)-carnitine(in) = (R)-carnitine(out). The enzyme catalyses spermidine(in) = spermidine(out). Its function is as follows. Facilitative organic cation transporter that mediates the transport of carnitine as well as the polyamine spermidine. Mediates the partially Na(+)-dependent bidirectional transport of carnitine. May mediate L-carnitine secretion from testis epididymal epithelium into the lumen which is involved in the maturation of spermatozoa. The protein is Solute carrier family 22 member 16 of Homo sapiens (Human).